The sequence spans 223 residues: Ribose-5-phosphate isomerase A (223 aa).

Substrate-binding positions include 32–35 (TGST), 85–88 (DGAD), and 98–101 (KGGG). Glu-107 (proton acceptor) is an active-site residue. Residue Lys-125 coordinates substrate.

It belongs to the ribose 5-phosphate isomerase family. As to quaternary structure, homodimer.

The catalysed reaction is aldehydo-D-ribose 5-phosphate = D-ribulose 5-phosphate. It participates in carbohydrate degradation; pentose phosphate pathway; D-ribose 5-phosphate from D-ribulose 5-phosphate (non-oxidative stage): step 1/1. Functionally, catalyzes the reversible conversion of ribose-5-phosphate to ribulose 5-phosphate. The protein is Ribose-5-phosphate isomerase A of Stutzerimonas stutzeri (strain A1501) (Pseudomonas stutzeri).